A 709-amino-acid polypeptide reads, in one-letter code: ATP-dependent zinc metalloprotease FtsH (709 aa).

The Cytoplasmic segment spans residues 1–25 (MKKNKGLNEATTSEKPQFPKRTAWK). A helical transmembrane segment spans residues 26–46 (IFWWVVILAIIIGILVYILMP). Over 47–171 (RATTAVIEKW…FVAPDTRARD (125 aa)) the chain is Extracellular. A helical transmembrane segment spans residues 172-192 (VLNIFFGLLPIIIFVIFFLLF). The Cytoplasmic portion of the chain corresponds to 193–709 (WRSARGISGG…DTEKDSETNS (517 aa)). 268–275 (GPPGTGKT) provides a ligand contact to ATP. A Zn(2+)-binding site is contributed by H490. E491 is an active-site residue. Zn(2+) is bound by residues H494 and D569. Residues 673–709 (ILAQKQEQQAKQKAEAKEAKLNKKTEKDTEKDSETNS) form a disordered region. Positions 680 to 709 (QQAKQKAEAKEAKLNKKTEKDTEKDSETNS) are enriched in basic and acidic residues.

In the central section; belongs to the AAA ATPase family. The protein in the C-terminal section; belongs to the peptidase M41 family. Homohexamer. Zn(2+) serves as cofactor.

Its subcellular location is the cell membrane. In terms of biological role, acts as a processive, ATP-dependent zinc metallopeptidase for both cytoplasmic and membrane proteins. Plays a role in the quality control of integral membrane proteins. The protein is ATP-dependent zinc metalloprotease FtsH of Mycoplasma pneumoniae (strain ATCC 29342 / M129 / Subtype 1) (Mycoplasmoides pneumoniae).